The sequence spans 820 residues: MNESYQPTLIEQLAQEYWEENETFEVKEDLSREKFYCLSMLPYPSGDLHMGHVRNYTIGDVIARYQIHKGRNVLQPMGWDAFGLPAENAAIQRELPPAEWTRKNIKKMRKQLKQLGFAYDWSREITTCDSTYYRWEQWLFLQLYKKGLAYKKNAIVNWDPVDQTVLANEQIVDGRGWRSGAVVERREISQWFLKITDYSEELLKDLDELKEWPEQVITMQRNWIGQSQGVIINFNFEKGPDKLQVYTTRPDTLMGVTYLAIAPEHPLAKERAKKSKKIAAFLKKCKQTRVAEADIATQEKEGIDSGLFAVHPLSKEKLPIWIANFVLMEYASGVVMAVPAHDERDHEFALKYDLPLKPVIEPADGHDWDYNQAAYTNPGKLINSGSFNDIDSKTAFNVIADYLKNNGAGSRQTHYRLRDWGISRQRYWGTPIPIIYCKTCGTVPVPENQLPVLLPEDIIPTGHGSPLKETASFYKTRCPVCNKPATRETDTMDTFVESSWYYARYSCPDQDKVMLDDRAKYWTPVDQYIGGIEHAVMHLLYARFMHKILRDLGLLNSNEPFIRLLTQGMVLKDGAKMSKSKGNVVTPQSLIKKYGADTVRLFIIFAAPPEQDLEWSDSGVEGAYRFLKKLWGFSYRIKDALLAINQQKERSNYQWEAPEHRQTRQQIHECLQQANIDMERLQFNTVVSAVMKILNILIKLTTDNDAEAHLIREGTGILLRLLSPITPHISHHLWQSLGFGGDILDTPWPRPDPKALQTTELELIVQINGKLRGRIQVPTEASKEIIESTALNQENVQRHLADKKIKKVIVVPKKLINIVV.

The 'HIGH' region signature appears at 42–52 (PYPSGDLHMGH). The 'KMSKS' region signature appears at 576 to 580 (KMSKS). Residue Lys-579 participates in ATP binding.

This sequence belongs to the class-I aminoacyl-tRNA synthetase family.

It localises to the cytoplasm. The catalysed reaction is tRNA(Leu) + L-leucine + ATP = L-leucyl-tRNA(Leu) + AMP + diphosphate. In Coxiella burnetii (strain RSA 331 / Henzerling II), this protein is Leucine--tRNA ligase.